The chain runs to 498 residues: Probable lysophospholipase BODYGUARD 3 (498 aa).

An N-terminal signal peptide occupies residues M1–Y55. C56 is lipidated: N-palmitoyl cysteine. The AB hydrolase-1 domain maps to V220–P326. Residue H224 is part of the active site. S297 acts as the Nucleophile in catalysis. Active-site charge relay system residues include D446 and H474.

It localises to the cell membrane. It is found in the secreted. The protein resides in the cell wall. Its function is as follows. Involved in cuticle development and morphogenesis. The polypeptide is Probable lysophospholipase BODYGUARD 3 (Arabidopsis thaliana (Mouse-ear cress)).